Reading from the N-terminus, the 345-residue chain is MNSKLFSPYTIKNVTLKNRIVMSPMCMYSSGNEDGRVTNFHLIHYGTRAAGQVGLVMVEATAVLAEGRISNNDLGIWDDNLIEGLHKTTTFIHDNGAKAAIQLAHAGRKAELDTNAFAPSAIPFNDKMKIPVEMNIQQIKETILAFQRAALRSKQAGFDVIELHGAHGYLINEFLSPLTNKRTDKYGGSPENRYRFLREIIDSVNEVWDGPIFVRISANDYHPDGLTVQDYVQYTKWMKEQGIDLIDCSSGAVVPAHIDVYPGYQVQYAKHIKEHTNIATGAVGLITTGSQAEQILNNNEADLIFIGRELLRNPYFPRIAANELGFELQEPHQYKRAPGKIHTNK.

23–26 (SPMC) contacts FMN. Tyr-28 contacts substrate. FMN-binding residues include Ala-60 and Gln-102. 164 to 167 (HGAH) is a binding site for substrate. FMN contacts are provided by residues Arg-215 and 307–308 (GR).

It belongs to the NADH:flavin oxidoreductase/NADH oxidase family. NamA subfamily. Homotetramer. Requires FMN as cofactor.

It catalyses the reaction A + NADPH + H(+) = AH2 + NADP(+). Its function is as follows. Catalyzes the reduction of the double bond of an array of alpha,beta-unsaturated aldehydes and ketones. It also reduces the nitro group of nitroester and nitroaromatic compounds. It could have a role in detoxification processes. In Bacillus cereus (strain ATCC 14579 / DSM 31 / CCUG 7414 / JCM 2152 / NBRC 15305 / NCIMB 9373 / NCTC 2599 / NRRL B-3711), this protein is NADPH dehydrogenase.